A 478-amino-acid polypeptide reads, in one-letter code: Glycogen synthase (478 aa).

Lysine 15 contacts ADP-alpha-D-glucose.

The protein belongs to the glycosyltransferase 1 family. Bacterial/plant glycogen synthase subfamily.

The enzyme catalyses [(1-&gt;4)-alpha-D-glucosyl](n) + ADP-alpha-D-glucose = [(1-&gt;4)-alpha-D-glucosyl](n+1) + ADP + H(+). It participates in glycan biosynthesis; glycogen biosynthesis. Its function is as follows. Synthesizes alpha-1,4-glucan chains using ADP-glucose. The chain is Glycogen synthase from Enterobacter sp. (strain 638).